Here is a 540-residue protein sequence, read N- to C-terminus: NADH-quinone oxidoreductase subunit N (540 aa).

Transmembrane regions (helical) follow at residues 24–44 (LSPMLIVFGVAVAGVLVEAFL), 54–74 (LVLALGGLTAAFVAVVLLAGT), 88–108 (PTLFLQGTILLISIPAILIIA), 158–178 (APGHTEVFPLTLFAVGGMLLF), 184–204 (LLTMFVALEVLSLPLYLLCGL), 219–239 (YFLLGAFSSAFFLFGVALLYG), 263–283 (ALIGTALLSVGLLFKIGAVPF), 295–315 (PTPITAFMAAATKVAAVGAML), 331–351 (PVMWGVAILTMVVGAVMAVTQ), 357–377 (MLAYSSVAHAGFILTGLVAAN), 385–405 (MFYLLAYGFSTLGAFAVVTLV), 428–448 (VGGVFALFLLAFAGIPLTSGF), 462–482 (GAVPLVLVGVVSSAIAAFFYV), and 505–525 (MFTAAAIAVGVVVTVVLGILP).

This sequence belongs to the complex I subunit 2 family. NDH-1 is composed of 14 different subunits. Subunits NuoA, H, J, K, L, M, N constitute the membrane sector of the complex.

The protein localises to the cell membrane. It catalyses the reaction a quinone + NADH + 5 H(+)(in) = a quinol + NAD(+) + 4 H(+)(out). In terms of biological role, NDH-1 shuttles electrons from NADH, via FMN and iron-sulfur (Fe-S) centers, to quinones in the respiratory chain. The immediate electron acceptor for the enzyme in this species is believed to be a menaquinone. Couples the redox reaction to proton translocation (for every two electrons transferred, four hydrogen ions are translocated across the cytoplasmic membrane), and thus conserves the redox energy in a proton gradient. This chain is NADH-quinone oxidoreductase subunit N, found in Rhodococcus opacus (strain B4).